A 484-amino-acid polypeptide reads, in one-letter code: tRNA-2-methylthio-N(6)-dimethylallyladenosine synthase (484 aa).

An MTTase N-terminal domain is found at 36–153; sequence GKLYIKTHGC…LPELIRARRE (118 aa). The [4Fe-4S] cluster site is built by cysteine 45, cysteine 82, cysteine 116, cysteine 190, cysteine 194, and cysteine 197. The Radical SAM core domain maps to 176–415; the sequence is RAEGPSAFVS…HISAHAASIS (240 aa). Residues 416–479 enclose the TRAM domain; that stretch reads QSMVGSVQRV…SNSLRGRIQL (64 aa). Positions 428-450 are disordered; sequence EGPSRRDPNELTGKSENMRPVNF.

Belongs to the methylthiotransferase family. MiaB subfamily. In terms of assembly, monomer. [4Fe-4S] cluster serves as cofactor.

The protein resides in the cytoplasm. It carries out the reaction N(6)-dimethylallyladenosine(37) in tRNA + (sulfur carrier)-SH + AH2 + 2 S-adenosyl-L-methionine = 2-methylsulfanyl-N(6)-dimethylallyladenosine(37) in tRNA + (sulfur carrier)-H + 5'-deoxyadenosine + L-methionine + A + S-adenosyl-L-homocysteine + 2 H(+). Functionally, catalyzes the methylthiolation of N6-(dimethylallyl)adenosine (i(6)A), leading to the formation of 2-methylthio-N6-(dimethylallyl)adenosine (ms(2)i(6)A) at position 37 in tRNAs that read codons beginning with uridine. In Xanthomonas oryzae pv. oryzae (strain MAFF 311018), this protein is tRNA-2-methylthio-N(6)-dimethylallyladenosine synthase.